The sequence spans 93 residues: Small ribosomal subunit protein uS19 (93 aa).

This sequence belongs to the universal ribosomal protein uS19 family.

Functionally, protein S19 forms a complex with S13 that binds strongly to the 16S ribosomal RNA. This Phytoplasma australiense protein is Small ribosomal subunit protein uS19.